A 370-amino-acid chain; its full sequence is Actin-related protein 2/3 complex subunit 1A (370 aa).

WD repeat units lie at residues 6–45, 50–89, 140–179, 202–241, 244–284, and 322–365; these read FLLEPITCHAWNRDRTQIALSPNNHEVHIYKKNGSQWVKA, EHNGHITGIDWAPKSDRIVTCGADRNAYVWSQKDGVWKPT, PIRSTVLSLDWHPNNVLLAAGSCDFKCRVFSAYIKEVDEK, GTGGWVHGVSFSASGSRLAWVSHDSTVSVADASKSVQVST, TEFL…TFVS, and LHQN…SSIQ.

The protein belongs to the WD repeat ARPC1 family. As to quaternary structure, probable component of the Arp2/3 complex in which it may replace ARPC1B. In addition to its role in the cytoplasmic cytoskeleton, the Arp2/3 complex also promotes actin polymerization in the nucleus, thereby regulating gene transcription and repair of damaged DNA.

Its subcellular location is the cytoplasm. It is found in the cytoskeleton. It localises to the nucleus. Functionally, probably functions as a component of the Arp2/3 complex which is involved in regulation of actin polymerization and together with an activating nucleation-promoting factor (NPF) mediates the formation of branched actin networks. The protein is Actin-related protein 2/3 complex subunit 1A (ARPC1A) of Homo sapiens (Human).